The following is a 216-amino-acid chain: U1 small nuclear ribonucleoprotein C (216 aa).

The Matrin-type zinc-finger motif lies at Phe-4–Glu-36. Pro residues-rich tracts occupy residues Ala-68 to Gly-80, Gln-87 to Pro-198, and Pro-206 to Arg-216. The tract at residues Ala-68 to Arg-216 is disordered.

This sequence belongs to the U1 small nuclear ribonucleoprotein C family. In terms of assembly, U1 snRNP is composed of the 7 core Sm proteins B/B', D1, D2, D3, E, F and G that assemble in a heptameric protein ring on the Sm site of the small nuclear RNA to form the core snRNP, and at least 3 U1 snRNP-specific proteins U1-70K, U1-A and U1-C. U1-C interacts with U1 snRNA and the 5' splice-site region of the pre-mRNA.

It is found in the nucleus. In terms of biological role, component of the spliceosomal U1 snRNP, which is essential for recognition of the pre-mRNA 5' splice-site and the subsequent assembly of the spliceosome. U1-C is directly involved in initial 5' splice-site recognition for both constitutive and regulated alternative splicing. The interaction with the 5' splice-site seems to precede base-pairing between the pre-mRNA and the U1 snRNA. Stimulates commitment or early (E) complex formation by stabilizing the base pairing of the 5' end of the U1 snRNA and the 5' splice-site region. The protein is U1 small nuclear ribonucleoprotein C of Aspergillus fumigatus (strain ATCC MYA-4609 / CBS 101355 / FGSC A1100 / Af293) (Neosartorya fumigata).